The following is a 1366-amino-acid chain: Protein HUA2-LIKE 2 (1366 aa).

One can recognise a PWWP domain in the interval 24–81; it reads VGDLVLAKVKGFPAWPAVVSEPEKWDASPDSKKVFVHFFGTQQIAFCNPGDVEAFTEE. The span at 111 to 124 shows a compositional bias: basic and acidic residues; it reads LKQQERASDPKSAE. Disordered regions lie at residues 111–138, 203–319, 384–403, 427–451, and 787–808; these read LKQQ…TLMP, TYSS…SGSK, NVQT…CEEN, EANS…AQTS, and SESA…TGEK. Over residues 213–252 the composition is skewed to polar residues; sequence VRSQNCAPQNETCPVQRSKSPSRLQTEKLQSSMLQNSDGG. The segment covering 391–403 has biased composition (basic and acidic residues); it reads SHEKFTERPCEEN. The segment covering 787 to 803 has biased composition (polar residues); that stretch reads SESANDMQNNSSGSPNI. A CID domain is found at 836 to 977; the sequence is DVQSTRESYE…HHIRELDSHS (142 aa). Disordered stretches follow at residues 1027 to 1076 and 1128 to 1366; these read LKDE…TAER and TSHQ…QRSD. Residues 1032-1052 are compositionally biased toward acidic residues; it reads GGSDSEGGCDSEGGSDSDGGD. Basic and acidic residues predominate over residues 1057–1066; that stretch reads TPEHESRILE. Positions 1138 to 1152 are enriched in pro residues; that stretch reads PPLPSSSPPPPPAPP. Residues 1191–1223 show a composition bias toward polar residues; it reads LSGSTMHYQGPESSYISGVQLTNSIPQADGSNF. Residues 1229–1244 show a composition bias toward pro residues; the sequence is PSHPHPHPPPPPPPPQ. Basic and acidic residues-rich tracts occupy residues 1251-1262 and 1275-1298; these read EPGHVLKSHRDA and CDER…RDNW. Residues 1299–1309 are compositionally biased toward low complexity; the sequence is RYPPSSSYGSR.

As to expression, expressed throughout young primordia, and vegetative and reproductive apices.

Its subcellular location is the nucleus. In terms of biological role, probable transcription factor that acts with partial redundancy with HULK1 and HULK3. Plays diverse and essential roles in the control of plant development, physiology and flowering time. The protein is Protein HUA2-LIKE 2 of Arabidopsis thaliana (Mouse-ear cress).